A 299-amino-acid chain; its full sequence is Protease HtpX homolog (299 aa).

2 helical membrane-spanning segments follow: residues 7 to 24 (GILM…GALI) and 29 to 46 (GAII…FTFW). His130 provides a ligand contact to Zn(2+). Glu131 is a catalytic residue. His134 contributes to the Zn(2+) binding site. The next 2 helical transmembrane spans lie at 145-165 (VTAT…FFGG) and 174-194 (PVGI…AGLV). Glu203 serves as a coordination point for Zn(2+).

The protein belongs to the peptidase M48B family. Zn(2+) serves as cofactor.

The protein resides in the cell inner membrane. The sequence is that of Protease HtpX homolog from Cereibacter sphaeroides (strain ATCC 17025 / ATH 2.4.3) (Rhodobacter sphaeroides).